Reading from the N-terminus, the 323-residue chain is Serine acetyltransferase 2 (323 aa).

The interval 302–323 is disordered; the sequence is AQSNGPSLSAGDTEKGHTNSTS. The segment covering 313–323 has biased composition (basic and acidic residues); that stretch reads DTEKGHTNSTS.

This sequence belongs to the transferase hexapeptide repeat family. Homomultimer. In terms of tissue distribution, ubiquitously expressed at low levels. Localized in vascular tissues, particularly in phloem.

The protein resides in the cytoplasm. The enzyme catalyses L-serine + acetyl-CoA = O-acetyl-L-serine + CoA. It functions in the pathway amino-acid biosynthesis; L-cysteine biosynthesis; L-cysteine from L-serine: step 1/2. In Arabidopsis thaliana (Mouse-ear cress), this protein is Serine acetyltransferase 2.